Here is a 349-residue protein sequence, read N- to C-terminus: Phenylalanine--tRNA ligase alpha subunit (349 aa).

E258 contacts Mg(2+).

This sequence belongs to the class-II aminoacyl-tRNA synthetase family. Phe-tRNA synthetase alpha subunit type 1 subfamily. In terms of assembly, tetramer of two alpha and two beta subunits. Mg(2+) serves as cofactor.

The protein localises to the cytoplasm. It catalyses the reaction tRNA(Phe) + L-phenylalanine + ATP = L-phenylalanyl-tRNA(Phe) + AMP + diphosphate + H(+). The chain is Phenylalanine--tRNA ligase alpha subunit from Rickettsia africae (strain ESF-5).